A 398-amino-acid polypeptide reads, in one-letter code: Acetate kinase (398 aa).

Position 10 (asparagine 10) interacts with Mg(2+). ATP is bound at residue lysine 17. Arginine 91 is a binding site for substrate. Residue aspartate 148 is the Proton donor/acceptor of the active site. ATP is bound by residues 208–212 (HLGNG), 283–285 (DCR), and 331–335 (GIGEN). Residue glutamate 385 coordinates Mg(2+).

The protein belongs to the acetokinase family. As to quaternary structure, homodimer. Mg(2+) serves as cofactor. The cofactor is Mn(2+).

It localises to the cytoplasm. The catalysed reaction is acetate + ATP = acetyl phosphate + ADP. The protein operates within metabolic intermediate biosynthesis; acetyl-CoA biosynthesis; acetyl-CoA from acetate: step 1/2. Functionally, catalyzes the formation of acetyl phosphate from acetate and ATP. Can also catalyze the reverse reaction. The chain is Acetate kinase from Shewanella woodyi (strain ATCC 51908 / MS32).